Here is a 263-residue protein sequence, read N- to C-terminus: Rano class II histocompatibility antigen, B-1 beta chain (263 aa).

The N-terminal stretch at 1–27 (MALQTPSFLLPAAVVVLMVLSSPGTEG) is a signal peptide. Positions 28–120 (RDSPRDFVYQ…SEVRTSLRRL (93 aa)) are beta-1. Over 28–224 (RDSPRDFVYQ…RAQSESAQSK (197 aa)) the chain is Extracellular. 2 cysteine pairs are disulfide-bonded: C42–C104 and C143–C199. N-linked (GlcNAc...) asparagine glycosylation is present at N46. The segment at 121 to 214 (EQPNVAISLS…SLESPVTVEW (94 aa)) is beta-2. One can recognise an Ig-like C1-type domain in the interval 123–211 (PNVAISLSRT…DHPSLESPVT (89 aa)). Positions 215–224 (RAQSESAQSK) are connecting peptide. Residues 225–245 (MLSGIGGFVLGVIFLGLGLFI) traverse the membrane as a helical segment. Topologically, residues 246-263 (RHKRQKGPRGPPPAGLLQ) are cytoplasmic. K251 is covalently cross-linked (Glycyl lysine isopeptide (Lys-Gly) (interchain with G-Cter in ubiquitin)).

The protein belongs to the MHC class II family.

It is found in the membrane. Involved in the presentation of foreign antigens to the immune system. This Rattus norvegicus (Rat) protein is Rano class II histocompatibility antigen, B-1 beta chain (RT1-Bb).